We begin with the raw amino-acid sequence, 578 residues long: Glycosyltransferase family 92 protein RCOM_0530710 (578 aa).

Residues 21-43 traverse the membrane as a helical segment; that stretch reads SFFSVRSLTACLSFFVFLLFISS. Residues 295–531 enclose the GT92 domain; it reads YELCACTMLW…QNQGSKDRAP (237 aa).

The protein belongs to the glycosyltransferase 92 family.

It is found in the membrane. The chain is Glycosyltransferase family 92 protein RCOM_0530710 from Ricinus communis (Castor bean).